The following is a 586-amino-acid chain: MKQSVSAEQIELKSSLPGSKKVYVDGPREGMKVPMREIEQSETNGVPNPPIRVYDTSGPYTDPEYKVELEKGIPTPRHSWIMGRGDVEAYEGREVKPEDDGVKVASKHTPVFPQMDRQPLRAKQGANVTQMHYARNGIITSEMEYVAIREGVEPEFVRKEIAEGRAILPANINHPEAEPMIIGRNFHVKVNANIGNSAVSSSIAEEVEKMTWATRWGADTIMDLSTGKNIHTTREWIIRNAPVPVGTVPIYQALEKVNGIAEDLTWEVYRDTLIEQAEQGVDYFTIHAGVLLRYIPITAKRTTGIVSRGGSIMAQWCLFHHKENFLYTHFEEICEIMKQYDVSFSLGDGLRPGSIADANDEAQFSELETLGELTKIAWKHDVQVMIEGPGHVPMHLIKENMEKELDICQGAPFYTLGPLTTDIAPGYDHITSAIGAAMIGWFGTAMLCYVTPKEHLGLPNKDDVRTGVITYKIAAHAADLAKGHKTAHQRDDALSKARFEFRWRDQFNLSLDPERAMEYHDETLPAEGAKTAHFCSMCGPKFCSMRISHDIREYAKENDLETTEAIEKGMKEKAEEFKEAGSHLYQ.

Positions 1–33 (MKQSVSAEQIELKSSLPGSKKVYVDGPREGMKV) are disordered. Positions 22–33 (VYVDGPREGMKV) are enriched in basic and acidic residues. Substrate contacts are provided by residues asparagine 193, methionine 222, tyrosine 251, histidine 287, 307-309 (SRG), 348-351 (DGLR), and glutamate 387. Histidine 391 lines the Zn(2+) pocket. Residue tyrosine 414 coordinates substrate. Position 455 (histidine 455) interacts with Zn(2+). [4Fe-4S] cluster contacts are provided by cysteine 535, cysteine 538, and cysteine 543.

The protein belongs to the ThiC family. It depends on [4Fe-4S] cluster as a cofactor.

It catalyses the reaction 5-amino-1-(5-phospho-beta-D-ribosyl)imidazole + S-adenosyl-L-methionine = 4-amino-2-methyl-5-(phosphooxymethyl)pyrimidine + CO + 5'-deoxyadenosine + formate + L-methionine + 3 H(+). It functions in the pathway cofactor biosynthesis; thiamine diphosphate biosynthesis. In terms of biological role, catalyzes the synthesis of the hydroxymethylpyrimidine phosphate (HMP-P) moiety of thiamine from aminoimidazole ribotide (AIR) in a radical S-adenosyl-L-methionine (SAM)-dependent reaction. This Bacillus cereus (strain B4264) protein is Phosphomethylpyrimidine synthase.